The chain runs to 157 residues: uncharacterized protein (157 aa).

Residues 42–64 form a helical membrane-spanning segment; it reads SCIRLIVMFICVAMITCPNSLRF.

Its subcellular location is the membrane. This is an uncharacterized protein from Saccharomyces cerevisiae (strain ATCC 204508 / S288c) (Baker's yeast).